A 284-amino-acid polypeptide reads, in one-letter code: Homoserine O-acetyltransferase 2 (284 aa).

The active-site Acyl-thioester intermediate is the Cys133. Positions 154 and 178 each coordinate substrate. The active-site Proton acceptor is the His220. Glu222 is an active-site residue. Residue Arg234 coordinates substrate.

Belongs to the MetA family.

It is found in the cytoplasm. The enzyme catalyses L-homoserine + acetyl-CoA = O-acetyl-L-homoserine + CoA. It participates in amino-acid biosynthesis; L-methionine biosynthesis via de novo pathway; O-acetyl-L-homoserine from L-homoserine: step 1/1. Functionally, transfers an acetyl group from acetyl-CoA to L-homoserine, forming acetyl-L-homoserine. The sequence is that of Homoserine O-acetyltransferase 2 from Ilyobacter polytropus (strain ATCC 51220 / DSM 2926 / LMG 16218 / CuHBu1).